A 361-amino-acid chain; its full sequence is Queuine tRNA-ribosyltransferase (361 aa).

The active-site Proton acceptor is the Asp92. Substrate-binding positions include 92–96, Asp146, Gln189, and Gly216; that span reads DSGGF. The segment at 247–253 is RNA binding; that stretch reads GVGKPAD. The active-site Nucleophile is Asp266. The interval 271–275 is RNA binding; important for wobble base 34 recognition; the sequence is TRSGR. Zn(2+)-binding residues include Cys304, Cys306, Cys309, and His335.

It belongs to the queuine tRNA-ribosyltransferase family. In terms of assembly, homodimer. Within each dimer, one monomer is responsible for RNA recognition and catalysis, while the other monomer binds to the replacement base PreQ1. It depends on Zn(2+) as a cofactor.

It carries out the reaction 7-aminomethyl-7-carbaguanine + guanosine(34) in tRNA = 7-aminomethyl-7-carbaguanosine(34) in tRNA + guanine. Its pathway is tRNA modification; tRNA-queuosine biosynthesis. Catalyzes the base-exchange of a guanine (G) residue with the queuine precursor 7-aminomethyl-7-deazaguanine (PreQ1) at position 34 (anticodon wobble position) in tRNAs with GU(N) anticodons (tRNA-Asp, -Asn, -His and -Tyr). Catalysis occurs through a double-displacement mechanism. The nucleophile active site attacks the C1' of nucleotide 34 to detach the guanine base from the RNA, forming a covalent enzyme-RNA intermediate. The proton acceptor active site deprotonates the incoming PreQ1, allowing a nucleophilic attack on the C1' of the ribose to form the product. After dissociation, two additional enzymatic reactions on the tRNA convert PreQ1 to queuine (Q), resulting in the hypermodified nucleoside queuosine (7-(((4,5-cis-dihydroxy-2-cyclopenten-1-yl)amino)methyl)-7-deazaguanosine). This chain is Queuine tRNA-ribosyltransferase, found in Rickettsia felis (strain ATCC VR-1525 / URRWXCal2) (Rickettsia azadi).